A 624-amino-acid polypeptide reads, in one-letter code: MTNPKEKTPMCLVNELARFNRIQPQYKLLDERGPAHSKLFTVQLTLGEQTWQAESTSIKKAQHAAASLALSETTLPKPAARQTKNHMNNNPEAAELHGNTFTSSRHSAKGSITPTVELNGLAMRRGEPAIYRSLDPKPLPNQRANYNYRGMYHQRYLCPMLKTFYVQLTVGNSEFYGEGKTRQAARHNAALKALHALRNEPIPERSSLNGEANRGPEEDKDANKSEISLVFEISLKRNLSLSFEVIKESGPPHMKSFVTRVTVGEFTAEGEGNSKKLAKRRAAAAVLQELRKLPPLPVIEKPRIYIKRRPKNIIKASPEYGQGMNPISRLAQIQQAKKEKEPEYVLLSERGIQRRREFVMQVKVGEETATGTGPNKKTAKRNAAEAMLLQLGYKASSPVVEKTGKRGENPDWDEQNSGIADQTSTPKGILHLSPDVYQEMEASRNKTVPAPAISYLSSKEMNQASSSFFSTSVSQSCTAAIARELLTNGTSPTAEAIGFTGKNLMCHSSTVQPSKQLEYLAGIQGLQVNYSDRQSGNDFLTCLTLSPVQMTFHGIGSSLEASHDQAALSALKQFSEQGLDSVDGSLMAENGPFEQAKLRGEKADNKQANSGTIAQDCKDSKAVV.

5 DRBM domains span residues 55 to 122 (STSI…NGLA), 142 to 228 (QRAN…SEIS), 254 to 321 (MKSF…PEYG), 354 to 422 (RRRE…IADQ), and 540 to 604 (LTCL…EKAD). A disordered region spans residues 197 to 223 (LRNEPIPERSSLNGEANRGPEEDKDAN). The span at 214 to 223 (RGPEEDKDAN) shows a compositional bias: basic and acidic residues. 2 disordered regions span residues 401–428 (EKTG…TPKG) and 592–624 (PFEQ…KAVV). Residues 415-426 (QNSGIADQTSTP) are compositionally biased toward polar residues. Basic and acidic residues predominate over residues 596-605 (AKLRGEKADN).

Its function is as follows. RNA-binding protein required for the microtubule-dependent transport of RNAs within polarized cell types. The sequence is that of Double-stranded RNA-binding protein Staufen homolog 2 (stau2) from Xenopus tropicalis (Western clawed frog).